Consider the following 212-residue polypeptide: Redox-sensing transcriptional repressor Rex (212 aa).

The H-T-H motif DNA-binding region spans 17 to 56; it reads LYARSLRYLLEEGIHSVSSQELGERINVTAAQIRKDLSYF. Residue 91-96 coordinates NAD(+); the sequence is GIGLLG.

This sequence belongs to the transcriptional regulatory Rex family. As to quaternary structure, homodimer.

The protein localises to the cytoplasm. Modulates transcription in response to changes in cellular NADH/NAD(+) redox state. This is Redox-sensing transcriptional repressor Rex from Chloroflexus aggregans (strain MD-66 / DSM 9485).